Here is a 290-residue protein sequence, read N- to C-terminus: HTH-type transcriptional regulator BudR (290 aa).

One can recognise an HTH lysR-type domain in the interval 1–58 (MELRYLRYFVAVAEARNFTRAAHDLGISQPPLSQQIQRLEREIGTPLLRRLTRGVELT). Positions 18–37 (FTRAAHDLGISQPPLSQQIQ) form a DNA-binding region, H-T-H motif.

Belongs to the LysR transcriptional regulatory family.

Its function is as follows. Regulator of the budABC operon for 2,3-butanediol synthesis. The protein is HTH-type transcriptional regulator BudR (budR) of Raoultella terrigena (Klebsiella terrigena).